We begin with the raw amino-acid sequence, 328 residues long: Alcohol-sensitive RING finger protein 1 (328 aa).

The RING-type 1; atypical zinc-finger motif lies at 18 to 61 (CSICWESMPSGVGRLMPCGHEYHLACIRKWFHLHSGNRSCPVCR). The segment at 129-177 (CGICGEMNGDIDTCCNRCHHMYHHSCLGQLLVEVNAEREQGWSHCIFCY) adopts an RING-type 2; atypical zinc-finger fold.

The protein localises to the cytoplasm. It is found in the nucleus. In terms of biological role, required for tolerance to alcohol. This Eremothecium gossypii (strain ATCC 10895 / CBS 109.51 / FGSC 9923 / NRRL Y-1056) (Yeast) protein is Alcohol-sensitive RING finger protein 1 (ASR1).